The primary structure comprises 463 residues: Argininosuccinate lyase (463 aa).

Belongs to the lyase 1 family. Argininosuccinate lyase subfamily.

The protein resides in the cytoplasm. The catalysed reaction is 2-(N(omega)-L-arginino)succinate = fumarate + L-arginine. Its pathway is amino-acid biosynthesis; L-arginine biosynthesis; L-arginine from L-ornithine and carbamoyl phosphate: step 3/3. The sequence is that of Argininosuccinate lyase from Ruegeria pomeroyi (strain ATCC 700808 / DSM 15171 / DSS-3) (Silicibacter pomeroyi).